The chain runs to 322 residues: MSSLRHATEIATTRWPAAAEPRPAALNHLHQLEAESIAILREVAAEFRKPVMLYSIGKDSSVLLHLAMKAFHPAKPPFPLLHIDTTWKFRDMIAFRDQRARELGLELLVHVNPEGLAQKISPFTHGSALYTDVMKTQALRQALDAHGFDAAIGGARRDEEKSRAKERIFSHRSATHRWDPKNQRPELWHLYNTMLAPGESMRVFPLSNWTELDVWDYIQLERIPIVPLYFAARRPVVERDGALIMVDDERMPLRPGETPQWRSIRFRTLGCYPLTGATPSTASDLAAIIREMRTSRTSERQGRVIDRDSAASMERKKVEGYF.

The protein belongs to the PAPS reductase family. CysD subfamily. In terms of assembly, heterodimer composed of CysD, the smaller subunit, and CysN.

It carries out the reaction sulfate + ATP + H(+) = adenosine 5'-phosphosulfate + diphosphate. It participates in sulfur metabolism; hydrogen sulfide biosynthesis; sulfite from sulfate: step 1/3. Functionally, with CysN forms the ATP sulfurylase (ATPS) that catalyzes the adenylation of sulfate producing adenosine 5'-phosphosulfate (APS) and diphosphate, the first enzymatic step in sulfur assimilation pathway. APS synthesis involves the formation of a high-energy phosphoric-sulfuric acid anhydride bond driven by GTP hydrolysis by CysN coupled to ATP hydrolysis by CysD. In Bradyrhizobium sp. (strain BTAi1 / ATCC BAA-1182), this protein is Sulfate adenylyltransferase subunit 2.